Reading from the N-terminus, the 392-residue chain is Glycerophosphodiester phosphodiesterase GDPD5 (392 aa).

An N-terminal signal peptide occupies residues 1–21 (MILTRCLPLIWLSLLTVCAAG). The GP-PDE domain maps to 44-362 (PYNIAHRGSN…DFTGSLHNFQ (319 aa)). Asn120, Asn239, Asn260, and Asn329 each carry an N-linked (GlcNAc...) asparagine glycan.

Belongs to the glycerophosphoryl diester phosphodiesterase family. Expressed in roots, rosette and cauline leaves, stems, flowers and siliques.

It is found in the secreted. Its subcellular location is the cell wall. It localises to the vacuole. The catalysed reaction is a sn-glycero-3-phosphodiester + H2O = an alcohol + sn-glycerol 3-phosphate + H(+). This chain is Glycerophosphodiester phosphodiesterase GDPD5, found in Arabidopsis thaliana (Mouse-ear cress).